Here is a 4544-residue protein sequence, read N- to C-terminus: Prolow-density lipoprotein receptor-related protein 1 (4544 aa).

An N-terminal signal peptide occupies residues 1-19; it reads MLTPPLLLLLPLLSALVAA. Topologically, residues 20-4419 are extracellular; the sequence is AIDAPKTCSP…EHVFSQQQPG (4400 aa). LDL-receptor class A domains are found at residues 25–66 and 70–110; these read KTCS…ICPQ and QRCQ…HCRE. 6 cysteine pairs are disulfide-bonded: cysteine 27–cysteine 40, cysteine 34–cysteine 53, cysteine 47–cysteine 64, cysteine 72–cysteine 85, cysteine 79–cysteine 98, and cysteine 92–cysteine 108. An EGF-like 1 domain is found at 111–149; the sequence is LQGNCSRLGCQHHCVPTLDGPTCYCNSSFQLQADGKTCK. Asparagine 114 is a glycosylation site (N-linked (GlcNAc...) asparagine). 6 disulfides stabilise this stretch: cysteine 115/cysteine 124, cysteine 120/cysteine 133, cysteine 135/cysteine 148, cysteine 154/cysteine 164, cysteine 160/cysteine 173, and cysteine 175/cysteine 188. The N-linked (GlcNAc...) asparagine glycan is linked to asparagine 136. The 40-residue stretch at 150-189 folds into the EGF-like 2; calcium-binding domain; sequence DFDECSVYGTCSQLCTNTDGSFICGCVEGYLLQPDNRSCK. Asparagine 185, asparagine 239, and asparagine 274 each carry an N-linked (GlcNAc...) asparagine glycan. LDL-receptor class B repeat units lie at residues 292-334, 335-378, and 379-422; these read GNFY…DPAM, GKVF…DLVS, and RLVY…FENY. N-linked (GlcNAc...) asparagine glycosylation occurs at asparagine 357. Asparagine 446 is a glycosylation site (N-linked (GlcNAc...) asparagine). The 47-residue stretch at 474–520 folds into the EGF-like 3 domain; that stretch reads RSHACENDQYGKPGGCSDICLLANSHKARTCRCRSGFSLGSDGKSCK. 3 disulfides stabilise this stretch: cysteine 478/cysteine 493, cysteine 489/cysteine 504, and cysteine 506/cysteine 519. 4 LDL-receptor class B repeats span residues 571–613, 614–659, 660–710, and 711–754; these read GFIY…DWMG, DNLY…DPLN, GWMY…DIPA, and GRLY…HGNY. Asparagine 729 carries an N-linked (GlcNAc...) (complex) asparagine glycan. Positions 803–843 constitute an EGF-like 4 domain; that stretch reads GTNKCRVNNGGCSSLCLATPGSRQCACAEDQVLDADGVTCL. Disulfide bonds link cysteine 807-cysteine 818, cysteine 814-cysteine 827, cysteine 829-cysteine 842, cysteine 854-cysteine 866, cysteine 861-cysteine 879, cysteine 873-cysteine 890, cysteine 895-cysteine 907, cysteine 902-cysteine 920, cysteine 914-cysteine 931, cysteine 936-cysteine 948, cysteine 943-cysteine 961, cysteine 955-cysteine 971, cysteine 976-cysteine 989, cysteine 984-cysteine 1002, cysteine 996-cysteine 1011, cysteine 1015-cysteine 1027, cysteine 1022-cysteine 1040, cysteine 1034-cysteine 1051, cysteine 1062-cysteine 1075, cysteine 1069-cysteine 1088, cysteine 1082-cysteine 1097, cysteine 1104-cysteine 1118, cysteine 1112-cysteine 1131, cysteine 1125-cysteine 1140, cysteine 1145-cysteine 1159, cysteine 1152-cysteine 1172, cysteine 1166-cysteine 1182, cysteine 1185-cysteine 1196, cysteine 1192-cysteine 1206, cysteine 1208-cysteine 1221, cysteine 1227-cysteine 1237, cysteine 1233-cysteine 1246, and cysteine 1248-cysteine 1261. 8 consecutive LDL-receptor class A domains span residues 852–892, 893–933, 934–973, 974–1013, 1013–1053, 1060–1099, 1102–1142, and 1143–1182; these read PQCQ…LCHQ, HTCP…TCSA, RTCP…SCAY, PTCF…GCSH, HSCS…NCTN, GGCH…SCEG, HVCD…NCES, and LACR…GELC. Residues tryptophan 871, aspartate 874, aspartate 876, aspartate 878, aspartate 884, and glutamate 885 each coordinate Ca(2+). A glycan (N-linked (GlcNAc...) asparagine) is linked at asparagine 928. Residues tryptophan 1032, aspartate 1035, aspartate 1037, aspartate 1039, aspartate 1045, and glutamate 1046 each contribute to the Ca(2+) site. Asparagine 1050 carries N-linked (GlcNAc...) asparagine glycosylation. Ca(2+) contacts are provided by tryptophan 1080, aspartate 1083, aspartate 1085, aspartate 1087, aspartate 1093, and glutamate 1094. Residues asparagine 1154 and asparagine 1155 are each glycosylated (N-linked (GlcNAc...) asparagine). 2 EGF-like domains span residues 1183–1222 and 1223–1262; these read DQCS…HTCQ and IQSY…ESCR. Asparagine 1195 and asparagine 1218 each carry an N-linked (GlcNAc...) asparagine glycan. LDL-receptor class B repeat units lie at residues 1309 to 1355, 1356 to 1398, 1399 to 1445, 1446 to 1490, and 1491 to 1531; these read SALY…DWIA, GNIY…DPRD, GILF…DYLE, KRIL…YGGE, and VYWT…YHPS. An N-linked (GlcNAc...) (complex) asparagine glycan is attached at asparagine 1511. Residues 1536 to 1579 enclose the EGF-like 7 domain; the sequence is APNPCEANGGQGPCSHLCLINYNRTVSCACPHLMKLHKDNTTCY. Cystine bridges form between cysteine 1540/cysteine 1553, cysteine 1549/cysteine 1563, and cysteine 1565/cysteine 1578. 4 N-linked (GlcNAc...) asparagine glycosylation sites follow: asparagine 1558, asparagine 1575, asparagine 1616, and asparagine 1645. 4 LDL-receptor class B repeats span residues 1627-1669, 1670-1713, 1714-1753, and 1754-1798; these read QRVY…DWVS, RNLF…HPLR, GKLY…DFPE, and SKLY…MGDK. N-linked (GlcNAc...) asparagine glycans are attached at residues asparagine 1723, asparagine 1733, asparagine 1763, and asparagine 1825. An EGF-like 8 domain is found at 1846 to 1887; the sequence is GTNPCSVNNGDCSQLCLPTSETTRSCMCTAGYSLRSGQQACE. Cystine bridges form between cysteine 1850/cysteine 1861, cysteine 1857/cysteine 1871, and cysteine 1873/cysteine 1886. Asparagine 1933 carries N-linked (GlcNAc...) asparagine glycosylation. LDL-receptor class B repeat units lie at residues 1934–1976, 1977–2019, 2020–2063, and 2064–2107; these read DTIY…DWIA, GNIY…HPEK, GYLF…DYQD, and GKLY…FEDF. Asparagine 1995 is a glycosylation site (N-linked (GlcNAc...) asparagine). Lysine 2009 carries the post-translational modification N6-acetyllysine. A glycan (N-linked (GlcNAc...) asparagine) is linked at asparagine 2048. Residues asparagine 2117 and asparagine 2127 are each glycosylated (N-linked (GlcNAc...) asparagine). The EGF-like 9 domain occupies 2155–2195; that stretch reads GTNVCAVANGGCQQLCLYRGRGQRACACAHGMLAEDGASCR. Disulfide bonds link cysteine 2159–cysteine 2170, cysteine 2166–cysteine 2180, and cysteine 2182–cysteine 2194. LDL-receptor class B repeat units follow at residues 2253 to 2294, 2295 to 2343, 2344 to 2388, 2389 to 2431, and 2432 to 2473; these read NRIF…HRGW, DTLY…DECQ, NLMF…DHRA, EKLY…YGEH, and IFWT…VAND. Asparagine 2472 carries N-linked (GlcNAc...) asparagine glycosylation. An EGF-like 10 domain is found at 2478–2518; the sequence is ELSPCRINNGGCQDLCLLTHQGHVNCSCRGGRILQDDLTCR. Disulfide bonds link cysteine 2482-cysteine 2493, cysteine 2489-cysteine 2503, and cysteine 2505-cysteine 2517. The N-linked (GlcNAc...) asparagine glycan is linked to asparagine 2502. The N-linked (GlcNAc...) asparagine glycan is linked to asparagine 2521. 7 LDL-receptor class A domains span residues 2522–2563, 2564–2602, 2603–2641, 2642–2690, 2694–2732, 2732–2771, and 2772–2814; these read SSCR…YCNS, RRCK…PCNK, TACG…NCSA, TDCS…DCPG, PRCP…HCNK, KFCS…HCEG, and KTCG…GCLY. Cystine bridges form between cysteine 2524/cysteine 2537, cysteine 2532/cysteine 2550, cysteine 2544/cysteine 2561, cysteine 2566/cysteine 2578, cysteine 2573/cysteine 2591, and cysteine 2585/cysteine 2600. Asparagine 2539 carries N-linked (GlcNAc...) asparagine glycosylation. Asparagine 2601 carries N-linked (GlcNAc...) asparagine glycosylation. 15 disulfides stabilise this stretch: cysteine 2605–cysteine 2617, cysteine 2612–cysteine 2630, cysteine 2624–cysteine 2639, cysteine 2644–cysteine 2666, cysteine 2660–cysteine 2679, cysteine 2673–cysteine 2688, cysteine 2696–cysteine 2708, cysteine 2703–cysteine 2721, cysteine 2715–cysteine 2730, cysteine 2734–cysteine 2746, cysteine 2741–cysteine 2759, cysteine 2753–cysteine 2769, cysteine 2774–cysteine 2787, cysteine 2781–cysteine 2800, and cysteine 2794–cysteine 2812. Residues asparagine 2620 and asparagine 2638 are each glycosylated (N-linked (GlcNAc...) asparagine). Residue asparagine 2815 is glycosylated (N-linked (GlcNAc...) asparagine). 3 LDL-receptor class A domains span residues 2816–2855, 2856–2899, and 2902–2940; these read STCD…ECEY, PTCG…HCTS, and HKCN…RGCH. 15 cysteine pairs are disulfide-bonded: cysteine 2818/cysteine 2830, cysteine 2825/cysteine 2843, cysteine 2837/cysteine 2853, cysteine 2858/cysteine 2870, cysteine 2865/cysteine 2884, cysteine 2878/cysteine 2897, cysteine 2904/cysteine 2917, cysteine 2912/cysteine 2930, cysteine 2924/cysteine 2939, cysteine 2944/cysteine 2956, cysteine 2952/cysteine 2965, cysteine 2967/cysteine 2980, cysteine 2986/cysteine 2996, cysteine 2992/cysteine 3005, and cysteine 3007/cysteine 3021. Asparagine 2905 is a glycosylation site (N-linked (GlcNAc...) asparagine). The EGF-like 11 domain maps to 2941 to 2981; the sequence is INECLSRKLSGCSQDCEDLKIGFKCRCRPGFRLKDDGRTCA. An EGF-like 12; calcium-binding domain is found at 2982-3022; that stretch reads DVDECSTTFPCSQRCINTHGSYKCLCVEGYAPRGGDPHSCK. Asparagine 3048 and asparagine 3089 each carry an N-linked (GlcNAc...) asparagine glycan. LDL-receptor class B repeat units follow at residues 3069–3113, 3114–3156, 3157–3200, 3201–3243, and 3244–3284; these read QMIY…DWVG, GNLY…DVQN, GYLY…DYVT, ERIY…FEDY, and VYWT…FHAL. Asparagine 3264 carries N-linked (GlcNAc...) asparagine glycosylation. Positions 3290-3331 constitute an EGF-like 13 domain; sequence PNHPCKVNNGGCSNLCLLSPGGGHKCACPTNFYLGSDGRTCV. 3 disulfide bridges follow: cysteine 3294/cysteine 3305, cysteine 3301/cysteine 3315, and cysteine 3317/cysteine 3330. LDL-receptor class A domains are found at residues 3332–3371, 3372–3410, 3411–3450, 3451–3491, 3492–3533, 3534–3572, 3573–3611, 3611–3649, 3652–3692, 3693–3733, and 3739–3778; these read SNCT…DCPE, FKCR…NCDI, HVCL…DCPE, VTCA…NCTQ, MTCG…ECDE, RTCE…SCTP, RPCS…DCTP, PRCD…ACGT, RTCP…ECAR, FVCP…DCEP, and THCK…DCSI. Asparagine 3333 is a glycosylation site (N-linked (GlcNAc...) asparagine). 39 disulfides stabilise this stretch: cysteine 3334/cysteine 3346, cysteine 3341/cysteine 3359, cysteine 3353/cysteine 3369, cysteine 3374/cysteine 3386, cysteine 3381/cysteine 3399, cysteine 3393/cysteine 3408, cysteine 3413/cysteine 3426, cysteine 3420/cysteine 3439, cysteine 3433/cysteine 3448, cysteine 3453/cysteine 3466, cysteine 3460/cysteine 3479, cysteine 3473/cysteine 3489, cysteine 3494/cysteine 3507, cysteine 3501/cysteine 3520, cysteine 3514/cysteine 3531, cysteine 3536/cysteine 3548, cysteine 3543/cysteine 3561, cysteine 3555/cysteine 3570, cysteine 3575/cysteine 3587, cysteine 3582/cysteine 3600, cysteine 3594/cysteine 3609, cysteine 3613/cysteine 3625, cysteine 3620/cysteine 3638, cysteine 3632/cysteine 3647, cysteine 3654/cysteine 3666, cysteine 3661/cysteine 3679, cysteine 3673/cysteine 3690, cysteine 3695/cysteine 3709, cysteine 3703/cysteine 3722, cysteine 3716/cysteine 3731, cysteine 3741/cysteine 3754, cysteine 3749/cysteine 3767, cysteine 3761/cysteine 3776, cysteine 3785/cysteine 3798, cysteine 3792/cysteine 3807, cysteine 3809/cysteine 3822, cysteine 3828/cysteine 3838, cysteine 3834/cysteine 3847, and cysteine 3849/cysteine 3860. N-linked (GlcNAc...) asparagine glycosylation occurs at asparagine 3488. Asparagine 3662 carries an N-linked (GlcNAc...) asparagine glycan. EGF-like domains lie at 3781–3823 and 3824–3861; these read KLTS…PGCQ and DINE…NTCK. The N-linked (GlcNAc...) asparagine glycan is linked to asparagine 3788. An N-linked (GlcNAc...) asparagine glycan is attached at asparagine 3839. 4 LDL-receptor class B repeats span residues 3912 to 3954, 3970 to 4012, 4013 to 4056, and 4057 to 4101; these read GRVY…HLNI, GNVY…DPLR, GTMY…DYHN, and ERLY…FEDY. The short motif at 3940–3943 is the Recognition site for proteolytical processing element; the sequence is RHRR. Residue asparagine 3953 is glycosylated (N-linked (GlcNAc...) asparagine). Asparagine 4075 and asparagine 4125 each carry an N-linked (GlcNAc...) asparagine glycan. EGF-like domains follow at residues 4147–4183, 4196–4232, 4232–4268, 4268–4304, 4304–4340, 4340–4375, and 4373–4409; these read VTNP…GTCV, RPGT…DKCE, ELDQ…PKCT, TQQV…DRCQ, QYRQ…SRCE, EVNK…PSCL, and SCLT…PRCE. 17 disulfides stabilise this stretch: cysteine 4151-cysteine 4160, cysteine 4156-cysteine 4169, cysteine 4171-cysteine 4182, cysteine 4200-cysteine 4210, cysteine 4204-cysteine 4220, cysteine 4222-cysteine 4231, cysteine 4236-cysteine 4246, cysteine 4240-cysteine 4256, cysteine 4258-cysteine 4267, cysteine 4272-cysteine 4282, cysteine 4276-cysteine 4292, cysteine 4294-cysteine 4303, cysteine 4308-cysteine 4318, cysteine 4312-cysteine 4328, cysteine 4330-cysteine 4339, cysteine 4344-cysteine 4352, and cysteine 4347-cysteine 4363. N-linked (GlcNAc...) asparagine glycosylation is present at asparagine 4179. Residues asparagine 4278 and asparagine 4279 are each glycosylated (N-linked (GlcNAc...) asparagine). Asparagine 4364 is a glycosylation site (N-linked (GlcNAc...) asparagine). Disulfide bonds link cysteine 4365/cysteine 4374, cysteine 4377/cysteine 4387, cysteine 4381/cysteine 4397, and cysteine 4399/cysteine 4408. A helical transmembrane segment spans residues 4420–4444; sequence HIASILIPLLLLLLLVLVAGVVFWY. Residues 4445-4544 are Cytoplasmic-facing; sequence KRRVQGAKGF…PEDEIGDPLA (100 aa). Residues 4445 to 4544 form an interaction with MAFB region; that stretch reads KRRVQGAKGF…PEDEIGDPLA (100 aa). Threonine 4460 carries the post-translational modification Phosphothreonine. An NPXY motif motif is present at residues 4502–4507; that stretch reads FTNPVY. Tyrosine 4507 is modified (phosphotyrosine). Serine 4517, serine 4520, and serine 4523 each carry phosphoserine.

This sequence belongs to the LDLR family. As to quaternary structure, heterodimer of an 85-kDa membrane-bound carboxyl subunit and a non-covalently attached 515-kDa N-terminal subunit. Intracellular domain interacts with MAFB. Found in a complex with PID1/PCLI1, LRP1 and CUBNI. Interacts with SNX17, PID1/PCLI1, PDGF and CUBN. The intracellular domain interacts with SHC1, GULP1 and DAB1. Can weakly interact (via NPXY motif) with DAB2 (via PID domain); the interaction is enhanced by tyrosine phosphorylation of the NPXY motif. Interacts with MDK; promotes neuronal survival. Interacts with LRPAP1; this interaction is followed by rapid internalization. Interacts with uPA/PLAU and PAI1/SERPINE1, either individually or in complex with each other, leading to rapid endocytosis; this interaction is abolished in the presence of LRPAP1/RAP. Also interacts with tPA/PLAT alone or in complex with SERPINE1. Interacts with the urokinase receptor PLAUR; this interaction leads to PLAUR internalization and is impaired in the presence of SORL1. Interacts with PDGFB. Interacts with TAU/MAPT, leading to endocytosis; this interaction is reduced in the presence of LRPAP1/RAP. Interacts with IGFBP3; this interaction mediates cell growth inhibition independently of IGF1. Interacts with ADGRG6. In terms of assembly, (Microbial infection) Interacts with bacterial exotoxins. (Microbial infection) Interacts with Rift valley fever virus (RVFV) glycoprotein N; this interaction facilitates virus entry. Cleaved into a 85 kDa membrane-spanning subunit (LRP-85) and a 515 kDa large extracellular domain (LRP-515) that remains non-covalently associated. Gamma-secretase-dependent cleavage of LRP-85 releases the intracellular domain from the membrane. In terms of processing, the N-terminus is blocked. Post-translationally, phosphorylated on serine and threonine residues. Phosphorylated on tyrosine residues upon stimulation with PDGF. Tyrosine phosphorylation promotes interaction with SHC1. In terms of tissue distribution, most abundant in liver, brain and lung.

It localises to the cell membrane. Its subcellular location is the membrane. It is found in the coated pit. The protein resides in the cytoplasm. The protein localises to the nucleus. It localises to the golgi outpost. Its subcellular location is the cytoskeleton. It is found in the microtubule organizing center. In terms of biological role, endocytic receptor involved in endocytosis and in phagocytosis of apoptotic cells. Required for early embryonic development. Involved in cellular lipid homeostasis. Involved in the plasma clearance of chylomicron remnants and activated LRPAP1 (alpha 2-macroglobulin), as well as the local metabolism of complexes between plasminogen activators and their endogenous inhibitors. Acts as an LRPAP1 alpha-2-macroglobulin receptor. Acts as TAU/MAPT receptor and controls the endocytosis of TAU/MAPT as well as its subsequent spread. May modulate cellular events, such as APP metabolism, kinase-dependent intracellular signaling, neuronal calcium signaling as well as neurotransmission. Also acts as a receptor for IGFBP3 to mediate cell growth inhibition. (Microbial infection) Functions as a receptor for Pseudomonas aeruginosa exotoxin A. This Homo sapiens (Human) protein is Prolow-density lipoprotein receptor-related protein 1.